Consider the following 181-residue polypeptide: K99 fimbrial protein (181 aa).

The signal sequence occupies residues 1-22; the sequence is MKKTLLAIILGGMAFATTNASA. An intrachain disulfide couples Cys-38 to Cys-79.

This sequence belongs to the fimbrial protein family.

The protein localises to the fimbrium. Its function is as follows. Fimbriae (also called pili), polar filaments radiating from the surface of the bacterium to a length of 0.5-1.5 micrometers and numbering 100-300 per cell, enable bacteria to colonize the epithelium of specific host organs. FanC is the main component of the K99 fimbriae. This Escherichia coli protein is K99 fimbrial protein (fanC).